We begin with the raw amino-acid sequence, 360 residues long: Dihydroorotate dehydrogenase (quinone) (360 aa).

FMN is bound by residues 60 to 64 and Thr-84; that span reads AGFDK. Position 64 (Lys-64) interacts with substrate. Residue 109-113 participates in substrate binding; that stretch reads NRMGF. FMN is bound by residues Asn-137 and Asn-168. Asn-168 contacts substrate. Ser-171 (nucleophile) is an active-site residue. Residue Asn-173 coordinates substrate. Residues Lys-213 and Ser-241 each contribute to the FMN site. Position 242–243 (242–243) interacts with substrate; it reads NT. Residues Gly-264, Gly-293, and 314-315 contribute to the FMN site; that span reads YS.

The protein belongs to the dihydroorotate dehydrogenase family. Type 2 subfamily. Monomer. FMN is required as a cofactor.

It is found in the cell membrane. It catalyses the reaction (S)-dihydroorotate + a quinone = orotate + a quinol. The protein operates within pyrimidine metabolism; UMP biosynthesis via de novo pathway; orotate from (S)-dihydroorotate (quinone route): step 1/1. Functionally, catalyzes the conversion of dihydroorotate to orotate with quinone as electron acceptor. This is Dihydroorotate dehydrogenase (quinone) from Bartonella tribocorum (strain CIP 105476 / IBS 506).